A 197-amino-acid chain; its full sequence is Ribosome maturation factor RimM (197 aa).

A PRC barrel domain is found at 92 to 164; sequence DEGWYEHELV…YILVTPPPGL (73 aa). The disordered stretch occupies residues 167–197; sequence INVEDSGETSDAGESGPGEAEPGKAEAGDNA. Residues 176–186 are compositionally biased toward low complexity; the sequence is SDAGESGPGEA. The segment covering 187–197 has biased composition (basic and acidic residues); sequence EPGKAEAGDNA.

It belongs to the RimM family. As to quaternary structure, binds ribosomal protein uS19.

The protein localises to the cytoplasm. In terms of biological role, an accessory protein needed during the final step in the assembly of 30S ribosomal subunit, possibly for assembly of the head region. Essential for efficient processing of 16S rRNA. May be needed both before and after RbfA during the maturation of 16S rRNA. It has affinity for free ribosomal 30S subunits but not for 70S ribosomes. The sequence is that of Ribosome maturation factor RimM from Arthrobacter sp. (strain FB24).